We begin with the raw amino-acid sequence, 363 residues long: Adenosine 3'-phospho 5'-phosphosulfate transporter 2 (363 aa).

10 helical membrane passes run 39-59 (WLQF…YGYM), 63-83 (IFKL…QFVI), 106-126 (IYGV…ASVG), 131-151 (PTQV…GILI), 157-177 (GWID…FTLA), 187-206 (SRGY…IGNI), 231-251 (VFIF…PFFL), 257-277 (TFGY…VVLT), 281-301 (VFGA…TIIL), and 310-330 (FTIE…LNLY).

This sequence belongs to the nucleotide-sugar transporter family. SLC35B subfamily.

The protein localises to the golgi apparatus membrane. Functionally, mediates the transport of adenosine 3'-phospho 5'-phosphosulfate (PAPS), from cytosol into Golgi. PAPS is a universal sulfuryl donor for sulfation events that take place in the Golgi. The chain is Adenosine 3'-phospho 5'-phosphosulfate transporter 2 (pst-2) from Caenorhabditis briggsae.